Consider the following 246-residue polypeptide: DNA polymerase sliding clamp (246 aa).

Belongs to the PCNA family. As to quaternary structure, homotrimer. The subunits circularize to form a toroid; DNA passes through its center. Replication factor C (RFC) is required to load the toroid on the DNA.

Functionally, sliding clamp subunit that acts as a moving platform for DNA processing. Responsible for tethering the catalytic subunit of DNA polymerase and other proteins to DNA during high-speed replication. This is DNA polymerase sliding clamp from Methanocella arvoryzae (strain DSM 22066 / NBRC 105507 / MRE50).